Reading from the N-terminus, the 281-residue chain is Probable ABC transporter ATP-binding protein AZC_3926 (281 aa).

Positions Met-1–Pro-38 are disordered. The ABC transporter domain maps to Leu-45 to Glu-277. Residue Gly-77–Thr-84 participates in ATP binding.

Belongs to the ABC transporter superfamily.

The polypeptide is Probable ABC transporter ATP-binding protein AZC_3926 (Azorhizobium caulinodans (strain ATCC 43989 / DSM 5975 / JCM 20966 / LMG 6465 / NBRC 14845 / NCIMB 13405 / ORS 571)).